The chain runs to 1034 residues: Protein argonaute 2 (1034 aa).

The interval 1 to 201 is disordered; it reads MEHERGGGGR…PMRRPDGGGS (201 aa). Positions 18–125 are enriched in gly residues; sequence GGRGGGGGDG…ESGGGGGRGG (108 aa). A compositionally biased stretch (low complexity) spans 172-187; sequence VVRVQPPAPPVAVSRS. The 114-residue stretch at 391 to 504 folds into the PAZ domain; the sequence is PVLDLVQKSV…VPIELCDLLE (114 aa). In terms of domain architecture, Piwi spans 688–989; the sequence is LLFCPMSDQH…AAYRGRLYYE (302 aa).

This sequence belongs to the argonaute family. Ago subfamily.

In terms of biological role, probably involved in the RNA silencing pathway. May bind to short RNAs such as microRNAs (miRNAs) or short interfering RNAs (siRNAs), and represses the translation of mRNAs which are complementary to them. This Oryza sativa subsp. japonica (Rice) protein is Protein argonaute 2 (AGO2).